We begin with the raw amino-acid sequence, 142 residues long: MKTYTAKPETVQRDWFVVDAAGQTLGRLATEIARRLRGKHKPEYTPHVDTGDYIVVINAEQVRVTGAKTTDKMYYHHSGFPGGIKSINFEKLIAKAPERVIETAVKGMLPKNPLGRDMYRKLKVYKGANHPHTAQQPQELKI.

Belongs to the universal ribosomal protein uL13 family. In terms of assembly, part of the 50S ribosomal subunit.

Its function is as follows. This protein is one of the early assembly proteins of the 50S ribosomal subunit, although it is not seen to bind rRNA by itself. It is important during the early stages of 50S assembly. This Pseudomonas paraeruginosa (strain DSM 24068 / PA7) (Pseudomonas aeruginosa (strain PA7)) protein is Large ribosomal subunit protein uL13.